Reading from the N-terminus, the 101-residue chain is Large ribosomal subunit protein eL30 (101 aa).

Belongs to the eukaryotic ribosomal protein eL30 family.

The sequence is that of Large ribosomal subunit protein eL30 (rpl30e) from Thermococcus celer.